A 356-amino-acid chain; its full sequence is Trans-enoyl reductase pgmF (356 aa).

NADP(+) is bound by residues 57–60 (VDFK), 175–178 (SGGC), 198–201 (STPN), tyrosine 216, 261–262 (VG), and 342–343 (AK).

This sequence belongs to the zinc-containing alcohol dehydrogenase family.

FAD-linked oxidoreductase; part of the gene cluster that mediates the biosynthesis of pleosporalin A, ascomycone A, as well as a third cryptic naphthoquinone derived pigment, all responsible for the coloration of conidia. The pathway begins with the biosynthesis of the cyclized heptaketide 3-acetonyl-1,6,8-trihydroxy-2-naphthaldehyde by the NR-PKS pgmA. The C-6 hydroxyl group is further methylated by the O-methyltransferase pgmB to yield fusarubinaldehyde which is in turn oxidized by the cytochrome P450 monooxygenase pgmC at C-9. The C-1 hydroxyl group is then methylated spontaneously. Although pgmE, pgmD and pgmH are essential for the production of pleosporalin A, it is not the case for the 2 other final products and it remains difficult to assign a specific function to each enzyme. PgmF and pgmG seem not to be involved in pigment biosynthesis although they were regulated by the cluster-specific transcription factor pgmR. The chain is Trans-enoyl reductase pgmF from Aspergillus terreus.